A 76-amino-acid polypeptide reads, in one-letter code: Adropin (76 aa).

The N-terminal stretch at 1 to 33 (MGAALSQGALIAIICNGLVGFLLLLLWVILCWA) is a signal peptide. Residues 41–76 (IDSLSESSPNSSPGPCPEKAPPPQKPSHEGSYLLQP) form a disordered region. The segment covering 52–65 (SPGPCPEKAPPPQK) has biased composition (pro residues).

The protein localises to the secreted. Its function is as follows. Involved in the regulation of glucose homeostasis and lipid metabolism. The sequence is that of Adropin (ENHO) from Bos taurus (Bovine).